The chain runs to 210 residues: Na(+)-translocating NADH-quinone reductase subunit D (210 aa).

Helical transmembrane passes span 11–31, 42–62, 72–92, 103–123, 131–151, and 178–198; these read ILAP…VCSA, FVMT…VSLI, IIVQ…VLKA, VFVG…AFAM, FIDG…VGFF, and NGLM…IWAI.

It belongs to the NqrDE/RnfAE family. In terms of assembly, composed of six subunits; NqrA, NqrB, NqrC, NqrD, NqrE and NqrF.

Its subcellular location is the cell inner membrane. The catalysed reaction is a ubiquinone + n Na(+)(in) + NADH + H(+) = a ubiquinol + n Na(+)(out) + NAD(+). NQR complex catalyzes the reduction of ubiquinone-1 to ubiquinol by two successive reactions, coupled with the transport of Na(+) ions from the cytoplasm to the periplasm. NqrA to NqrE are probably involved in the second step, the conversion of ubisemiquinone to ubiquinol. The sequence is that of Na(+)-translocating NADH-quinone reductase subunit D from Vibrio atlanticus (strain LGP32) (Vibrio splendidus (strain Mel32)).